The sequence spans 65 residues: Large ribosomal subunit protein bL35 (65 aa).

It belongs to the bacterial ribosomal protein bL35 family.

This chain is Large ribosomal subunit protein bL35, found in Buchnera aphidicola subsp. Acyrthosiphon pisum (strain 5A).